The primary structure comprises 524 residues: N-acetylgalactosamine-6-sulfatase (524 aa).

A signal peptide spans Met1–Gly27. A catalytic domain region spans residues Ala28–Asp381. 3 residues coordinate Ca(2+): Asp40, Asp41, and Cys80. The active-site Nucleophile is Cys80. 3-oxoalanine (Cys) is present on Cys80. Residue His143 is part of the active site. N-linked (GlcNAc...) asparagine glycosylation is present at Asn205. Ca(2+)-binding residues include Asp290 and Asn291. A disulfide bridge links Cys310 with Cys421. An N-linked (GlcNAc...) asparagine glycan is attached at Asn425. Intrachain disulfides connect Cys491/Cys520 and Cys503/Cys509.

The protein belongs to the sulfatase family. Homodimer. Requires Ca(2+) as cofactor. Post-translationally, the conversion to 3-oxoalanine (also known as C-formylglycine, FGly), of a serine or cysteine residue in prokaryotes and of a cysteine residue in eukaryotes, is critical for catalytic activity.

It localises to the lysosome. It catalyses the reaction Hydrolysis of the 6-sulfate groups of the N-acetyl-D-galactosamine 6-sulfate units of chondroitin sulfate and of the D-galactose 6-sulfate units of keratan sulfate.. This Rattus norvegicus (Rat) protein is N-acetylgalactosamine-6-sulfatase (Galns).